We begin with the raw amino-acid sequence, 426 residues long: Serine--tRNA ligase (426 aa).

Position 235–237 (235–237 (TAE)) interacts with L-serine. 266 to 268 (RRE) is a binding site for ATP. Glu-289 lines the L-serine pocket. Residue 353–356 (EISS) coordinates ATP. Position 389 (Ser-389) interacts with L-serine.

This sequence belongs to the class-II aminoacyl-tRNA synthetase family. Type-1 seryl-tRNA synthetase subfamily. In terms of assembly, homodimer. The tRNA molecule binds across the dimer.

It localises to the cytoplasm. It carries out the reaction tRNA(Ser) + L-serine + ATP = L-seryl-tRNA(Ser) + AMP + diphosphate + H(+). The catalysed reaction is tRNA(Sec) + L-serine + ATP = L-seryl-tRNA(Sec) + AMP + diphosphate + H(+). Its pathway is aminoacyl-tRNA biosynthesis; selenocysteinyl-tRNA(Sec) biosynthesis; L-seryl-tRNA(Sec) from L-serine and tRNA(Sec): step 1/1. Functionally, catalyzes the attachment of serine to tRNA(Ser). Is also able to aminoacylate tRNA(Sec) with serine, to form the misacylated tRNA L-seryl-tRNA(Sec), which will be further converted into selenocysteinyl-tRNA(Sec). This Nostoc sp. (strain PCC 7120 / SAG 25.82 / UTEX 2576) protein is Serine--tRNA ligase.